The primary structure comprises 302 residues: 4-hydroxy-tetrahydrodipicolinate synthase (302 aa).

Thr50 lines the pyruvate pocket. The active-site Proton donor/acceptor is the Tyr138. Lys167 (schiff-base intermediate with substrate) is an active-site residue. Val209 is a binding site for pyruvate.

The protein belongs to the DapA family. In terms of assembly, homotetramer; dimer of dimers.

It is found in the cytoplasm. The enzyme catalyses L-aspartate 4-semialdehyde + pyruvate = (2S,4S)-4-hydroxy-2,3,4,5-tetrahydrodipicolinate + H2O + H(+). It participates in amino-acid biosynthesis; L-lysine biosynthesis via DAP pathway; (S)-tetrahydrodipicolinate from L-aspartate: step 3/4. Its function is as follows. Catalyzes the condensation of (S)-aspartate-beta-semialdehyde [(S)-ASA] and pyruvate to 4-hydroxy-tetrahydrodipicolinate (HTPA). In Salinibacter ruber (strain DSM 13855 / M31), this protein is 4-hydroxy-tetrahydrodipicolinate synthase.